We begin with the raw amino-acid sequence, 461 residues long: Autophagy-related protein 6 (461 aa).

The span at 75 to 88 (EEHGTDSSPDHDSS) shows a compositional bias: basic and acidic residues. Disordered stretches follow at residues 75–94 (EEHG…ASLV) and 101–124 (EEPV…PISG). A compositionally biased stretch (low complexity) spans 103 to 113 (PVPVSAPSPES). The stretch at 194–286 (TKLRDSIQEC…VLNRLDHLRN (93 aa)) forms a coiled coil.

It belongs to the beclin family.

Required for cytoplasm to vacuole transport (Cvt) and autophagy. Also involved in endosome-to-Golgi retrograde transport. The sequence is that of Autophagy-related protein 6 (ATG6) from Meyerozyma guilliermondii (strain ATCC 6260 / CBS 566 / DSM 6381 / JCM 1539 / NBRC 10279 / NRRL Y-324) (Yeast).